Reading from the N-terminus, the 303-residue chain is Imidazoleglycerol-phosphate dehydratase (303 aa).

This sequence belongs to the imidazoleglycerol-phosphate dehydratase family.

The protein resides in the cytoplasm. The enzyme catalyses D-erythro-1-(imidazol-4-yl)glycerol 3-phosphate = 3-(imidazol-4-yl)-2-oxopropyl phosphate + H2O. The protein operates within amino-acid biosynthesis; L-histidine biosynthesis; L-histidine from 5-phospho-alpha-D-ribose 1-diphosphate: step 6/9. The polypeptide is Imidazoleglycerol-phosphate dehydratase (Neisseria gonorrhoeae (strain ATCC 700825 / FA 1090)).